We begin with the raw amino-acid sequence, 664 residues long: UvrABC system protein C (664 aa).

One can recognise a GIY-YIG domain in the interval 63–141 (LRPGVYRMYD…IKRYRPPYNI (79 aa)). The UVR domain maps to 254-289 (THVQKKLVTAMEQASNDLNYELAAVYRDRLKALAFI).

The protein belongs to the UvrC family. Interacts with UvrB in an incision complex.

Its subcellular location is the cytoplasm. In terms of biological role, the UvrABC repair system catalyzes the recognition and processing of DNA lesions. UvrC both incises the 5' and 3' sides of the lesion. The N-terminal half is responsible for the 3' incision and the C-terminal half is responsible for the 5' incision. This Zymomonas mobilis subsp. mobilis (strain ATCC 31821 / ZM4 / CP4) protein is UvrABC system protein C.